Consider the following 206-residue polypeptide: Protein-methionine-sulfoxide reductase heme-binding subunit MsrQ (206 aa).

6 helical membrane-spanning segments follow: residues 14-34 (IKPL…WLGA), 45-65 (FLTR…LAIT), 82-102 (MCGL…VWWD), 118-138 (PFIT…ATST), 149-169 (WQVL…HFWW), and 179-199 (QPLL…AAWW).

This sequence belongs to the MsrQ family. In terms of assembly, heterodimer of a catalytic subunit (MsrP) and a heme-binding subunit (MsrQ). It depends on FMN as a cofactor. Heme b serves as cofactor.

It is found in the cell inner membrane. Functionally, part of the MsrPQ system that repairs oxidized periplasmic proteins containing methionine sulfoxide residues (Met-O), using respiratory chain electrons. Thus protects these proteins from oxidative-stress damage caused by reactive species of oxygen and chlorine generated by the host defense mechanisms. MsrPQ is essential for the maintenance of envelope integrity under bleach stress, rescuing a wide series of structurally unrelated periplasmic proteins from methionine oxidation. MsrQ provides electrons for reduction to the reductase catalytic subunit MsrP, using the quinone pool of the respiratory chain. This is Protein-methionine-sulfoxide reductase heme-binding subunit MsrQ from Bordetella bronchiseptica (strain ATCC BAA-588 / NCTC 13252 / RB50) (Alcaligenes bronchisepticus).